Reading from the N-terminus, the 817-residue chain is DNA replication licensing factor Mcm6 (817 aa).

The C4-type zinc finger occupies 152–179 (CLDCQTEIRNVEQQFKFTNPTICRNPVC). In terms of domain architecture, MCM spans 338–544 (LYQNLISSLF…VVDYAIARKI (207 aa)). ATP is bound by residues serine 391, threonine 392, alanine 393, lysine 394, serine 395, and asparagine 496. The Arginine finger motif lies at 520 to 523 (SRFD). ADP contacts are provided by arginine 611 and glutamate 614.

This sequence belongs to the MCM family. As to quaternary structure, component of the Mcm2-7 complex. The complex forms a toroidal hexameric ring with the proposed subunit order Mcm2-Mcm6-Mcm4-Mcm7-Mcm3-Mcm5. The heterodimers of Mcm4/Mcm6 and Mcm3/Mcm5 interact with Mcm2 and Mcm7. In stage 12 embryos, strongly expressed in the CNS and weakly in the gut.

It localises to the nucleus. It catalyses the reaction ATP + H2O = ADP + phosphate + H(+). Its function is as follows. Acts as a component of the Mcm2-7 complex (Mcm complex) which is the putative replicative helicase essential for 'once per cell cycle' DNA replication initiation and elongation in eukaryotic cells. Core component of CDC45-MCM-GINS (CMG) helicase, the molecular machine that unwinds template DNA during replication, and around which the replisome is built. The active ATPase sites in the Mcm2-7 ring are formed through the interaction surfaces of two neighboring subunits such that a critical structure of a conserved arginine finger motif is provided in trans relative to the ATP-binding site of the Walker A box of the adjacent subunit. The six ATPase active sites, however, are likely to contribute differentially to the complex helicase activity Required for DNA replication and cell proliferation. Required for mitotic cycles, endocycles, and the special S phase associated with the amplification of chorion genes; has a role in origin unwinding or fork elongation at chorion loci. This Drosophila melanogaster (Fruit fly) protein is DNA replication licensing factor Mcm6.